Consider the following 298-residue polypeptide: Mitochondrial intermembrane space import and assembly protein 40 (298 aa).

The N-terminal 33 residues, 1-33 (MYRTALRPSQSALRAIRSTTSPSALVSSGARRF), are a transit peptide targeting the mitochondrion. The Mitochondrial matrix segment spans residues 34–52 (ASTTSAPKKKSTWKGAAVR). A helical; Signal-anchor for type II membrane protein membrane pass occupies residues 53 to 69 (WGLAVAAVYYYNTSPIF). Residues 70–298 (SDELPETAGT…TAANNNKKQQ (229 aa)) lie on the Mitochondrial intermembrane side of the membrane. The interval 101 to 159 (RQAAEHAAARKAAQAAAKAAATPATPSESVEEQITKAEAEAEAVPEGDSKPRSESTEGV) is disordered. Positions 110–121 (RKAAQAAAKAAA) are enriched in low complexity. Cystine bridges form between C191-C193, C202-C235, and C212-C225. Residues 199–243 (HGPCGEEFKAAFSCFVYSTEEPKGMDCIEKFSHMQDCFRKYPEVY) form the CHCH domain. Short sequence motifs (cx9C motif) lie at residues 202 to 212 (CGEEFKAAFSC) and 225 to 235 (CIEKFSHMQDC). Residues 248-298 (ADDEEAERASAAAPAAEGTPAKEEPVENKKEEALEPATHDATAANNNKKQQ) are disordered. Low complexity predominate over residues 256–266 (ASAAAPAAEGT). The span at 267-280 (PAKEEPVENKKEEA) shows a compositional bias: basic and acidic residues.

As to quaternary structure, monomer. Requires Cu(2+) as cofactor. Zn(2+) serves as cofactor.

It is found in the mitochondrion inner membrane. Its function is as follows. Required for the import and folding of small cysteine-containing proteins (small Tim) in the mitochondrial intermembrane space (IMS). Forms a redox cycle with ERV1 that involves a disulfide relay system. Precursor proteins to be imported into the IMS are translocated in their reduced form into the mitochondria. The oxidized form of MIA40 forms a transient intermolecular disulfide bridge with the reduced precursor protein, resulting in oxidation of the precursor protein that now contains an intramolecular disulfide bond and is able to undergo folding in the IMS. In Neurospora crassa (strain ATCC 24698 / 74-OR23-1A / CBS 708.71 / DSM 1257 / FGSC 987), this protein is Mitochondrial intermembrane space import and assembly protein 40 (mia-40).